The primary structure comprises 283 residues: Elongation factor Ts (283 aa).

Residues 84–87 (TDFV) are involved in Mg(2+) ion dislocation from EF-Tu.

It belongs to the EF-Ts family.

It is found in the cytoplasm. In terms of biological role, associates with the EF-Tu.GDP complex and induces the exchange of GDP to GTP. It remains bound to the aminoacyl-tRNA.EF-Tu.GTP complex up to the GTP hydrolysis stage on the ribosome. This is Elongation factor Ts from Bifidobacterium longum subsp. infantis (strain ATCC 15697 / DSM 20088 / JCM 1222 / NCTC 11817 / S12).